Here is a 284-residue protein sequence, read N- to C-terminus: Homeobox protein six1b (284 aa).

Residues 124–183 (GEETSYCFKEKSRGVLREWYTHNPYPSPREKRELAEATGLTTTQVSNWFKNRRQRDRAAE) constitute a DNA-binding region (homeobox). The disordered stretch occupies residues 167–238 (QVSNWFKNRR…NSVLLLQGNM (72 aa)). Over residues 179 to 190 (DRAAEAKERENS) the composition is skewed to basic and acidic residues. 2 stretches are compositionally biased toward polar residues: residues 191–204 (ENNN…NQLS) and 226–238 (PDQN…QGNM).

This sequence belongs to the SIX/Sine oculis homeobox family. In terms of assembly, interacts with eya1.

It is found in the nucleus. The protein resides in the cytoplasm. Its function is as follows. Transcription factor that is involved in the regulation of cell proliferation, apoptosis and embryonic development. Depending on context, functions as a transcriptional repressor or activator. Transcriptional activation is enhanced by eya1 (in vitro). Plays an important role in the development of the inner ear, where it promotes hair cell proliferation and inhibits proliferation of neural progenitor cells. Required for normal myogenesis. Plays a role in the development of fast muscle fibers throughout the body, as well as the development of craniofacial muscles. Required for normal expression of myod1 and myog during myogenesis. This chain is Homeobox protein six1b (six1b), found in Danio rerio (Zebrafish).